The sequence spans 485 residues: Glutamyl-tRNA(Gln) amidotransferase subunit A (485 aa).

Active-site charge relay system residues include K82 and S157. Residue S181 is the Acyl-ester intermediate of the active site.

It belongs to the amidase family. GatA subfamily. In terms of assembly, heterotrimer of A, B and C subunits.

It carries out the reaction L-glutamyl-tRNA(Gln) + L-glutamine + ATP + H2O = L-glutaminyl-tRNA(Gln) + L-glutamate + ADP + phosphate + H(+). Allows the formation of correctly charged Gln-tRNA(Gln) through the transamidation of misacylated Glu-tRNA(Gln) in organisms which lack glutaminyl-tRNA synthetase. The reaction takes place in the presence of glutamine and ATP through an activated gamma-phospho-Glu-tRNA(Gln). The sequence is that of Glutamyl-tRNA(Gln) amidotransferase subunit A from Treponema denticola (strain ATCC 35405 / DSM 14222 / CIP 103919 / JCM 8153 / KCTC 15104).